The chain runs to 93 residues: Small ribosomal subunit protein uS17 (93 aa).

The protein belongs to the universal ribosomal protein uS17 family. As to quaternary structure, part of the 30S ribosomal subunit.

Its function is as follows. One of the primary rRNA binding proteins, it binds specifically to the 5'-end of 16S ribosomal RNA. This Corynebacterium aurimucosum (strain ATCC 700975 / DSM 44827 / CIP 107346 / CN-1) (Corynebacterium nigricans) protein is Small ribosomal subunit protein uS17.